We begin with the raw amino-acid sequence, 346 residues long: NADH-ubiquinone oxidoreductase chain 2 (346 aa).

10 helical membrane passes run 25 to 45, 56 to 76, 94 to 114, 122 to 142, 148 to 168, 178 to 198, 200 to 220, 240 to 260, 278 to 298, and 325 to 345; these read NLLL…PLLA, ATKY…VIIL, LLNM…FHYW, IPLH…LSIL, LLNP…GAWG, IMAY…PYNP, LTLL…ITLM, ILTM…LTGF, LSTL…RLIY, and FILP…SQLI.

This sequence belongs to the complex I subunit 2 family. In terms of assembly, core subunit of respiratory chain NADH dehydrogenase (Complex I) which is composed of 45 different subunits. Interacts with TMEM242.

It localises to the mitochondrion inner membrane. The catalysed reaction is a ubiquinone + NADH + 5 H(+)(in) = a ubiquinol + NAD(+) + 4 H(+)(out). Functionally, core subunit of the mitochondrial membrane respiratory chain NADH dehydrogenase (Complex I) which catalyzes electron transfer from NADH through the respiratory chain, using ubiquinone as an electron acceptor. Essential for the catalytic activity and assembly of complex I. In Rattus norvegicus (Rat), this protein is NADH-ubiquinone oxidoreductase chain 2.